Consider the following 210-residue polypeptide: Redox-sensing transcriptional repressor Rex (210 aa).

The segment at residues lysine 17–phenylalanine 56 is a DNA-binding region (H-T-H motif). An NAD(+)-binding site is contributed by glycine 91 to glycine 96.

Belongs to the transcriptional regulatory Rex family. In terms of assembly, homodimer.

Its subcellular location is the cytoplasm. Modulates transcription in response to changes in cellular NADH/NAD(+) redox state. This chain is Redox-sensing transcriptional repressor Rex, found in Clostridium kluyveri (strain ATCC 8527 / DSM 555 / NBRC 12016 / NCIMB 10680 / K1).